The sequence spans 412 residues: Serine hydroxymethyltransferase (412 aa).

(6S)-5,6,7,8-tetrahydrofolate-binding positions include leucine 125 and glycine 129–leucine 131. Lysine 234 is subject to N6-(pyridoxal phosphate)lysine. A (6S)-5,6,7,8-tetrahydrofolate-binding site is contributed by glutamate 250.

It belongs to the SHMT family. Homodimer. Pyridoxal 5'-phosphate is required as a cofactor.

It localises to the cytoplasm. The enzyme catalyses (6R)-5,10-methylene-5,6,7,8-tetrahydrofolate + glycine + H2O = (6S)-5,6,7,8-tetrahydrofolate + L-serine. It participates in one-carbon metabolism; tetrahydrofolate interconversion. It functions in the pathway amino-acid biosynthesis; glycine biosynthesis; glycine from L-serine: step 1/1. Catalyzes the reversible interconversion of serine and glycine with tetrahydrofolate (THF) serving as the one-carbon carrier. This reaction serves as the major source of one-carbon groups required for the biosynthesis of purines, thymidylate, methionine, and other important biomolecules. Also exhibits THF-independent aldolase activity toward beta-hydroxyamino acids, producing glycine and aldehydes, via a retro-aldol mechanism. This Deinococcus geothermalis (strain DSM 11300 / CIP 105573 / AG-3a) protein is Serine hydroxymethyltransferase.